The primary structure comprises 171 residues: O-acetyl-ADP-ribose deacetylase 1 (171 aa).

Residues 1-171 form the Macro domain; that stretch reads MKKITVIQGD…NYDLYLKLLN (171 aa). Residues 10 to 11, Asn24, 32 to 34, and 121 to 125 contribute to the substrate site; these read DI, GVD, and STGIY. The active-site Proton acceptor is the Asp34.

The protein belongs to the MacroD-type family. YmdB subfamily. Homodimer. Interacts with RNase III.

It catalyses the reaction 3''-O-acetyl-ADP-D-ribose + H2O = ADP-D-ribose + acetate + H(+). The catalysed reaction is 2''-O-acetyl-ADP-D-ribose + H2O = ADP-D-ribose + acetate + H(+). In terms of biological role, deacetylates O-acetyl-ADP ribose to yield ADP-ribose and free acetate. Down-regulates ribonuclease 3 (RNase III) activity. Acts by interacting directly with the region of the ribonuclease that is required for dimerization/activation. The chain is O-acetyl-ADP-ribose deacetylase 1 from Pantoea vagans (strain C9-1) (Pantoea agglomerans (strain C9-1)).